Consider the following 936-residue polypeptide: Sine oculis-binding protein homolog A (936 aa).

Residues 1–14 (MAEMEKEGRPPESK) are compositionally biased toward basic and acidic residues. Disordered regions lie at residues 1–46 (MAEM…GQAG) and 108–151 (ASTL…HGGL). Residues 108-144 (ASTLENSSGSPPHANSSGSTPTSRNGVTAESSVNPSS) show a composition bias toward polar residues. 2 FCS-type zinc fingers span residues 169 to 207 (EDSS…KCFA) and 247 to 287 (LKTN…KCLN). Disordered regions lie at residues 311-330 (LPTS…LTPE), 336-424 (LSEL…VMTP), 486-511 (SPHL…HPAA), 574-632 (NPQR…KQTE), 697-727 (PPPA…DTYS), and 842-877 (DSAG…EDHA). Positions 349 to 382 (GATIAGPSGSTSGSPSEAGTVCSSSSSSSSSSSS) are enriched in low complexity. A compositionally biased stretch (pro residues) spans 395–404 (SLPPPHPPPI). Composition is skewed to polar residues over residues 617–632 (PPNS…KQTE), 708–717 (DGSTSISTGT), and 850–859 (NDQSAITTGT).

This sequence belongs to the SOBP family.

In terms of biological role, implicated in development of the cochlea. This Danio rerio (Zebrafish) protein is Sine oculis-binding protein homolog A (sobpa).